Reading from the N-terminus, the 98-residue chain is UPF0213 protein BPUM_0019 (98 aa).

Residues 4-79 (HNHYFYVLKC…KTWTRKKKDL (76 aa)) form the GIY-YIG domain.

It belongs to the UPF0213 family.

This is UPF0213 protein BPUM_0019 from Bacillus pumilus (strain SAFR-032).